A 235-amino-acid polypeptide reads, in one-letter code: Large ribosomal subunit protein uL1 (235 aa).

The protein belongs to the universal ribosomal protein uL1 family. In terms of assembly, part of the 50S ribosomal subunit.

Its function is as follows. Binds directly to 23S rRNA. The L1 stalk is quite mobile in the ribosome, and is involved in E site tRNA release. In terms of biological role, protein L1 is also a translational repressor protein, it controls the translation of the L11 operon by binding to its mRNA. The polypeptide is Large ribosomal subunit protein uL1 (Prochlorococcus marinus (strain MIT 9515)).